Reading from the N-terminus, the 81-residue chain is Large ribosomal subunit protein bL31B (81 aa).

It belongs to the bacterial ribosomal protein bL31 family. Type B subfamily. Part of the 50S ribosomal subunit.

The sequence is that of Large ribosomal subunit protein bL31B from Lactobacillus helveticus (strain DPC 4571).